Reading from the N-terminus, the 401-residue chain is Probable thioesterase FGSG_00047 (401 aa).

Residues 379–401 (AREMDQRKRQKDFTHTTIHDKNS) are disordered.

Belongs to the AMT4 thioesterase family.

The protein operates within mycotoxin biosynthesis. In terms of biological role, probable thioesterase; part of the gene cluster that mediates the biosynthesis of gramillins A and B, bicyclic lipopeptides that induce cell death in maize leaves but not in wheat leaves. The nonribosomal peptide synthetase GRA1 incorporates respectively a glutamic adic (Glu), a leucine (Leu), a serine (Ser), a hydroxyglutamine (HOGln), a 2-amino decanoic acid, and 2 cysteins (CysB and CysA). The biosynthesis of 2-amino decanoic acid incorporated in gramillins could be initiated by a fatty acid synthase composed of the alpha and beta subunits FGSG_00036 and FGSG_11656. The cytochrome P450 monooxygenase FGSG_15680 could hydroxylate the fatty acid chain. Subsequent oxidation to the ketone by the oxidoreductase FGSG_00048 and transamination by aminotransferase FGSG_00049 could form 2-amino-decanoic acid. On the other hand, FGSG_15680 could also be responsible for the HO-modified glutamine at the gamma-position. Whether hydroxylation occurs on the fully assembled product or on the Gln residue prior to assembly into the gramillins requires further proof. The thioredoxin FGSG_00043 could also be required for the disulfide-bond formation between CysA and CysB. The specific involvement of the remaining proteins from the cluster is more difficult to discern, but could have broader regulatory (FGSG_00040 and FGSG_11657) or enzymatic functions (FGSG_00044 and FGSG_00045). The final C-domain of GRA1 does not possess the expected sequence of a termination CT domain, often implicated in macrocyclization and release of a cyclopeptidein fungal NRPs; and the thioesterase FGSG_00047 may act in concert with the terminal C-domain of GRA1 to catalyze the formation of the macrocyclic anhydride and release of the products. This is Probable thioesterase FGSG_00047 from Gibberella zeae (strain ATCC MYA-4620 / CBS 123657 / FGSC 9075 / NRRL 31084 / PH-1) (Wheat head blight fungus).